The primary structure comprises 287 residues: MSAIDGLPPLRDVIRRHDLAARKSLGQNFLLDLNLTARIARAAGPLDDVTVVEIGPGPGGLTRALLATGARRVIAIERDERALGALEEIAAHYPGRLEIVCADAMDFDPTPLLGGERAKIVANLPYNIATPLLIGWLCTEPWPPWYDMMVLMFQREVAQRIVAREDDDAYGRLAVLSNWRCETNMLFDIAPSAFVPQPKVTSSVVRLAPRAAPEPCNRAALEQVAAAAFGQRRKMLRQSLKSLGVDPARLAAAAGIDPTRRAETVAVSGFVAMANELNNIRNTKTQT.

The S-adenosyl-L-methionine site is built by Asn-28, Leu-30, Gly-55, Glu-77, Asp-103, and Asn-123.

It belongs to the class I-like SAM-binding methyltransferase superfamily. rRNA adenine N(6)-methyltransferase family. RsmA subfamily.

Its subcellular location is the cytoplasm. It catalyses the reaction adenosine(1518)/adenosine(1519) in 16S rRNA + 4 S-adenosyl-L-methionine = N(6)-dimethyladenosine(1518)/N(6)-dimethyladenosine(1519) in 16S rRNA + 4 S-adenosyl-L-homocysteine + 4 H(+). In terms of biological role, specifically dimethylates two adjacent adenosines (A1518 and A1519) in the loop of a conserved hairpin near the 3'-end of 16S rRNA in the 30S particle. May play a critical role in biogenesis of 30S subunits. The sequence is that of Ribosomal RNA small subunit methyltransferase A from Rhodopseudomonas palustris (strain BisB5).